Reading from the N-terminus, the 259-residue chain is uncharacterized protein (259 aa).

This sequence to M.thermoautotrophicum MTH738.

This is an uncharacterized protein from Methanocaldococcus jannaschii (strain ATCC 43067 / DSM 2661 / JAL-1 / JCM 10045 / NBRC 100440) (Methanococcus jannaschii).